We begin with the raw amino-acid sequence, 244 residues long: Type I iodothyronine deiodinase (244 aa).

At 1 to 12 (MGLSQLGLWLRR) the chain is on the extracellular side. Residues 13 to 33 (LWVLFQVALQVAVGKVFLILF) form a helical; Signal-anchor for type III membrane protein membrane-spanning segment. Residues 34-244 (PSRVKQHIVA…VRAVLEKLHS (211 aa)) lie on the Cytoplasmic side of the membrane. Residue Sec-121 is part of the active site. Position 121 (Sec-121) is a non-standard amino acid, selenocysteine.

It belongs to the iodothyronine deiodinase family. As to quaternary structure, predominantly monomer. Can form homodimers but homodimerization is not essential for enzyme activity.

It is found in the cell membrane. It localises to the endoplasmic reticulum membrane. Its subcellular location is the basolateral cell membrane. The enzyme catalyses 3,3',5-triiodo-L-thyronine + iodide + A + H(+) = L-thyroxine + AH2. The catalysed reaction is 3,3',5'-triiodo-L-thyronine + iodide + A + H(+) = L-thyroxine + AH2. It carries out the reaction 3,3'-diiodo-L-thyronine + iodide + A + H(+) = 3,3',5'-triiodo-L-thyronine + AH2. It catalyses the reaction 3,3'-diiodo-L-thyronine + iodide + A + H(+) = 3,3',5-triiodo-L-thyronine + AH2. The enzyme catalyses 3'-iodo-L-thyronine + iodide + A + H(+) = 3',5'-diiodo-L-thyronine + AH2. The catalysed reaction is 3-iodo-L-thyronine + iodide + A + H(+) = 3,5-diiodo-L-thyronine + AH2. It carries out the reaction 3-iodo-L-thyronine + iodide + A + H(+) = 3,3'-diiodo-L-thyronine + AH2. It catalyses the reaction 3,3'-diiodothyronamine + iodide + A + H(+) = 3,3',5'-triiodothyronamine + AH2. The enzyme catalyses 3'-iodothyronamine + iodide + A + H(+) = 3',5'-diiodothyronamine + AH2. The catalysed reaction is 3-iodothyronamine + iodide + A + H(+) = 3,3'-diiodothyronamine + AH2. It carries out the reaction 3,3'-diiodothyronamine + iodide + A + H(+) = 3,3',5-triiodothyronamine + AH2. It catalyses the reaction 3-iodothyronamine + iodide + A + H(+) = 3,5-diiodothyronamine + AH2. The enzyme catalyses 3,3'-diiodo-L-thyronine sulfate + iodide + A + H(+) = 3,3',5'-triiodo-L-thyronine sulfate + AH2. The catalysed reaction is 3,3',5'-triiodo-L-thyronine sulfate + iodide + A + H(+) = L-thyroxine sulfate + AH2. It carries out the reaction 3,3'-diiodo-L-thyronine sulfate + iodide + A + H(+) = 3,3',5-triiodo-L-thyronine sulfate + AH2. In terms of biological role, plays a crucial role in the metabolism of thyroid hormones (TH) and has specific roles in TH activation and inactivation by deiodination. Catalyzes the deiodination of L-thyroxine (T4) to 3,5,3'-triiodothyronine (T3) and 3',5'-diiodothyronine (3',5'-T2) to 3'-monoiodothyronine (3'-T1) via outer-ring deiodination (ORD). Catalyzes the deiodination of T4 to 3,3',5'-triiodothyronine (rT3), T3 to 3,3'-diiodothyronine (3,3'-T2), 3,5-diiodothyronine (3,5-T2) to 3-monoiodothyronine (3-T1) and 3,3'-T2 to 3-T1 via inner-ring deiodination (IRD). Catalyzes the deiodination of rT3 to 3,3'-T2 via ORD. Catalyzes the phenolic ring deiodinations of 3,3',5'-triiodothyronamine, 3',5'-diiodothyronamine and 3,3'-diiodothyronamine as well as tyrosyl ring deiodinations of 3,5,3'-triiodothyronamine and 3,5-diiodothyronamine. Catalyzes the deiodination of L-thyroxine sulfate and 3,3',5-triiodo-L-thyronine sulfate via IRD and of 3,3',5'-triiodo-L-thyronine sulfate via ORD. In Felis catus (Cat), this protein is Type I iodothyronine deiodinase (DIO1).